The primary structure comprises 320 residues: ATP-dependent 6-phosphofructokinase (320 aa).

An ATP-binding site is contributed by Gly12. Residues 22 to 26 (RGVVR) and 55 to 60 (RYSVSD) contribute to the ADP site. ATP is bound by residues 73–74 (RF) and 103–106 (GDGS). Asp104 lines the Mg(2+) pocket. 126-128 (TID) provides a ligand contact to substrate. Asp128 functions as the Proton acceptor in the catalytic mechanism. Arg155 is an ADP binding site. Substrate contacts are provided by residues Arg163 and 170 to 172 (MGR). ADP contacts are provided by residues 186 to 188 (GCE), Lys212, and 214 to 216 (KKH). Substrate is bound by residues Glu223, Arg244, and 250–253 (HIQR).

This sequence belongs to the phosphofructokinase type A (PFKA) family. ATP-dependent PFK group I subfamily. Prokaryotic clade 'B1' sub-subfamily. In terms of assembly, homotetramer. Mg(2+) serves as cofactor.

The protein resides in the cytoplasm. The catalysed reaction is beta-D-fructose 6-phosphate + ATP = beta-D-fructose 1,6-bisphosphate + ADP + H(+). The protein operates within carbohydrate degradation; glycolysis; D-glyceraldehyde 3-phosphate and glycerone phosphate from D-glucose: step 3/4. With respect to regulation, allosterically activated by ADP and other diphosphonucleosides, and allosterically inhibited by phosphoenolpyruvate. In terms of biological role, catalyzes the phosphorylation of D-fructose 6-phosphate to fructose 1,6-bisphosphate by ATP, the first committing step of glycolysis. In Enterobacter cloacae, this protein is ATP-dependent 6-phosphofructokinase.